The chain runs to 1759 residues: MASDYYQVEILHYLNPNLIWVEVLNSPNEISFEQLGVYGILPIDASLDVERPGLKLQRSEDWMPATAILMKNIFQNLEQVWFSPTHIDRRSSIFDNNIHKYGELIIKKNGVQLYLSKELVKAGLATEDPCQFHQYMSLGKIKTKLSNTETRAVIKNLEEYYRKSSKPKELWQKSVHQNTSIFHAGERLQALTVKNLERHNNRQNIMLLENKLKDLEQCKGSDEVSLGRGVCRVPSNKSEMVMLTNKRLKNRLELLSKINMKSDATDAVKSTKRNFSGDGQRKNFENDFESDDESVKKVSIANTINTSDGSANVVDKLLDEKQIDNVFNNKKQICYTESTRRNPVKKAACIVYGPPSINIDKLPLKEAPKMTKTVKWTPHVDCDKEASEVSFGDVDSHVKLDVKNLDKFHEIADRIEIEKTIPVDVNIHKDLYDSMINNKNESESKIMETANLKTEMKNLRKSSILQSKLKQFDKFNVSSNSAASESSTKSSMDSSRISDEDDLSSDDEMSEIMETFKLNLATPKKSEAKHTIDHIEVNNTKLNANPFKNLDGSKSVFVDKLTSPVLLVHTKRNNKVQPCSLLRDVPFGTSIHVVLRNMGIKHPTRLQTVSWGTILRGLSTFLISPPRSGKTMGYLPAVCRLVRDFRKESPDSCGPKCIIVCATSKSVSEVERISKMLLGLEDKVFACYSGMDNLSVTTALLNGCDLLICTPKSIVRLLQNDLSVDLRDLTTFVVDDCERISDVYSNEVKYVLYEIKNMLKNRVNKELKVQIVVASRIWCDFLEPIVLKAPDSVVCIGAFQELILYSKISTTVDFLRPENKIANVLQFIDSVQGPKRTVVVCRADNEVKAVESSLRYNNRVVFACDNTMNIHDLYNLNVVWGDFEDPTLGPILVCCDSNLVHLNVTDASYLIHYSLPALFSTFCKRFSVLNDNYPSIFKNESRDLKVKVLMDESNVEQLPKILNFLKRCTENVPKILDEVSEKILNEKDLAKVKDLVPLCDNLLSLGICPDTWNCTERHRIFKECDSPADWIPKNGVVTFQILYFHSAVMYSARLLSNTVDGETTKYPQTYSTLSLKMGMYFSKESSRRLHGIPMVGDVCAVSKKQNFFIRCQVVKIISFYKNGNPNYVVIKLIDEEKFEQSRDIYLYHLPDEFKDMKTYVVQVRLANIQPQDKDITFSCLAKNELEKIVEKNEDLFMRGHVAMSVGSCIFVDTLEACLDLSSLSETVVRHNFKQELLNAHAVPNPKHLSILEEMCEKSGLIVKAVTNEQVVPKPIPVLPAAQWAHLEDDLSSVYLASVEDMDKLFVRLVKFESCMKLLNIEINKYVSENTVPLDGSNVGDIVLAKFPDDSMYERARIDHIYSEDKVKCFFVDQGDWRDVSTNDLATITENFITQLPFQAIECRLIGIRPFGEQWTEFSTNWFSDHCFEDAKGNLKHLYVKHFTKEKADCTGGHKYGVALIDTYTNEDIIVNQLLIDLNLAKENVDEIAYLSEIKCNKTVLNNDATVDEEEGSLSGVSEPESNINVPLDKVFLKAPIRSVPLVDSEYETSDSDTWQINRPEDFKALFMRTRPESSKIIPMITANEVQNNADGETSKDTSTILEEKGQLPEKVKDDELKLSKPKICWSQNKNTVKLKILIAGIEDYKLKIEDRAVAFSANHCDVEYGFKLELYGVVDVNKSRHSNKGQYVLVTMTKLMCRNWLALTKEGDSQKWIVYDVDTIEASSDEEVYRDDTLEVIKNIHNTNNGSDSEDDDFLDDVS.

Residues 74–153 (FQNLEQVWFS…KLSNTETRAV (80 aa)) form the Tudor 1 domain. The segment covering 480 to 495 (NSAASESSTKSSMDSS) has biased composition (low complexity). A disordered region spans residues 480 to 506 (NSAASESSTKSSMDSSRISDEDDLSSD). The 179-residue stretch at 611 to 789 (WGTILRGLST…DFLEPIVLKA (179 aa)) folds into the Helicase ATP-binding domain. 624-631 (SPPRSGKT) is a binding site for ATP. One can recognise a Helicase C-terminal domain in the interval 823 to 980 (NVLQFIDSVQ…NVPKILDEVS (158 aa)). The region spanning 1335-1394 (GSNVGDIVLAKFPDDSMYERARIDHIYSEDKVKCFFVDQGDWRDVSTNDLATITENFITQ) is the Tudor 2 domain. A CS domain is found at 1618–1704 (LSKPKICWSQ…LMCRNWLALT (87 aa)).

As to quaternary structure, interacts (via Tudor domain 2) with Siwi. Component of the PET complex, at least composed of EXD1, SIWI, TDRD12 and piRNAs. Expressed in the yolk cells. Not detected in yolk granules.

The protein localises to the chromosome. Its subcellular location is the cytoplasm. The protein resides in the cytosol. It is found in the nucleus membrane. The enzyme catalyses ATP + H2O = ADP + phosphate + H(+). Probable ATP-binding RNA helicase required during spermatogenesis to repress transposable elements and preventing their mobilization, which is essential for the germline integrity. Acts via the piRNA metabolic process, which mediates the repression of transposable elements during meiosis by forming complexes composed of piRNAs and Piwi proteins and governs the methylation and subsequent repression of transposons. This chain is Putative ATP-dependent RNA helicase TDRD12 (TDRD12), found in Bombyx mori (Silk moth).